Consider the following 336-residue polypeptide: Glycerol-3-phosphate dehydrogenase [NAD(P)+] (336 aa).

NADPH contacts are provided by Ser-14, Trp-15, Arg-35, Arg-36, and Lys-109. Sn-glycerol 3-phosphate is bound by residues Lys-109 and Gly-139. Ala-143 contacts NADPH. Sn-glycerol 3-phosphate-binding residues include Lys-194, Asp-247, Ser-257, Arg-258, and Asn-259. Catalysis depends on Lys-194, which acts as the Proton acceptor. Arg-258 serves as a coordination point for NADPH. Glu-284 lines the NADPH pocket.

The protein belongs to the NAD-dependent glycerol-3-phosphate dehydrogenase family.

The protein localises to the cytoplasm. It catalyses the reaction sn-glycerol 3-phosphate + NAD(+) = dihydroxyacetone phosphate + NADH + H(+). It carries out the reaction sn-glycerol 3-phosphate + NADP(+) = dihydroxyacetone phosphate + NADPH + H(+). It functions in the pathway membrane lipid metabolism; glycerophospholipid metabolism. In terms of biological role, catalyzes the reduction of the glycolytic intermediate dihydroxyacetone phosphate (DHAP) to sn-glycerol 3-phosphate (G3P), the key precursor for phospholipid synthesis. The polypeptide is Glycerol-3-phosphate dehydrogenase [NAD(P)+] (Streptomyces griseus subsp. griseus (strain JCM 4626 / CBS 651.72 / NBRC 13350 / KCC S-0626 / ISP 5235)).